Reading from the N-terminus, the 552-residue chain is Non-structural protein NS1 (552 aa).

Belongs to the orbivirus non-structural protein NS1 family.

In Bluetongue virus 1 (isolate Australia) (BTV 1), this protein is Non-structural protein NS1 (Segment-5).